Reading from the N-terminus, the 553-residue chain is Putative transport protein PM1071 (553 aa).

5 consecutive transmembrane segments (helical) span residues 4 to 24, 28 to 48, 65 to 85, 91 to 111, and 157 to 177; these read IAIT…IGHW, GVGL…HFTN, FGLI…FFAS, LKLN…VIVI, and MAYA…MWLI. 2 RCK C-terminal domains span residues 190–276 and 277–361; these read KNFL…VLGE and EVDV…ILGN. 6 consecutive transmembrane segments (helical) span residues 371 to 391, 403 to 425, 439 to 459, 464 to 484, 496 to 516, and 533 to 553; these read MLPV…PFHI, AGGP…LYWF, IVLF…DTLV, LEWM…VGIV, LCGL…ANAI, and LVMF…WTLL.

This sequence belongs to the AAE transporter (TC 2.A.81) family. YidE subfamily.

The protein localises to the cell membrane. The polypeptide is Putative transport protein PM1071 (Pasteurella multocida (strain Pm70)).